Reading from the N-terminus, the 931-residue chain is Probable ubiquitin-like-specific protease 2B (931 aa).

Residues 204 to 224 are disordered; the sequence is SLSDRSALSEASDSEDDEEDW. Residues 215–224 show a composition bias toward acidic residues; that stretch reads SDSEDDEEDW. Active-site residues include His-489, Asp-522, and Cys-577. The tract at residues 825–931 is disordered; the sequence is HEEEIDESPP…PTGEAEEMEK (107 aa). The span at 839–851 shows a compositional bias: polar residues; that stretch reads SLKSATVGSNTAD. Residues 873–904 are compositionally biased toward basic and acidic residues; sequence NDRDEEKPLEHDLEIGDKTSEDVGDDCDQKEP.

Belongs to the peptidase C48 family.

Functionally, protease that catalyzes two essential functions in the SUMO pathway: processing of full-length SUMOs to their mature forms and deconjugation of SUMO from targeted proteins. The protein is Probable ubiquitin-like-specific protease 2B (ULP2B) of Arabidopsis thaliana (Mouse-ear cress).